Consider the following 108-residue polypeptide: RNA silencing suppressor (108 aa).

The interval 47 to 50 (RRRR) is basic. The C4-type zinc-finger motif lies at 57-78 (CHRCYRLWPPTVFTTRCDNKYC).

Belongs to the carlaviruses nucleic acid-binding protein family.

Functionally, suppressor of viral-induced RNA silencing. The potential mechanism of action is based on sequestering siRNAs. The sequence is that of RNA silencing suppressor from Solanum tuberosum (Potato).